A 172-amino-acid chain; its full sequence is Acetolactate synthase small subunit (172 aa).

Residues 4 to 78 (TLSVLVEDEA…NILKVDNITE (75 aa)) enclose the ACT domain.

This sequence belongs to the acetolactate synthase small subunit family. As to quaternary structure, dimer of large and small chains.

The protein resides in the plastid. It is found in the chloroplast. The enzyme catalyses 2 pyruvate + H(+) = (2S)-2-acetolactate + CO2. Its pathway is amino-acid biosynthesis; L-isoleucine biosynthesis; L-isoleucine from 2-oxobutanoate: step 1/4. The protein operates within amino-acid biosynthesis; L-valine biosynthesis; L-valine from pyruvate: step 1/4. This chain is Acetolactate synthase small subunit (ilvH), found in Cyanidium caldarium (Red alga).